Here is a 484-residue protein sequence, read N- to C-terminus: Glutamyl-tRNA(Gln) amidotransferase subunit B, mitochondrial (484 aa).

This sequence belongs to the GatB/GatE family. GatB subfamily. As to quaternary structure, subunit of the heterotrimeric GatFAB amidotransferase (AdT) complex, composed of A, B and F subunits.

Its subcellular location is the mitochondrion. The catalysed reaction is L-glutamyl-tRNA(Gln) + L-glutamine + ATP + H2O = L-glutaminyl-tRNA(Gln) + L-glutamate + ADP + phosphate + H(+). Allows the formation of correctly charged Gln-tRNA(Gln) through the transamidation of misacylated Glu-tRNA(Gln) in the mitochondria. The reaction takes place in the presence of glutamine and ATP through an activated gamma-phospho-Glu-tRNA(Gln). This Candida tropicalis (strain ATCC MYA-3404 / T1) (Yeast) protein is Glutamyl-tRNA(Gln) amidotransferase subunit B, mitochondrial.